Consider the following 234-residue polypeptide: MKLLVSPINREEAIIASLGGADIVDVKNPKEGSLGANFPWVIRDVKEVVNGRQPISATIGDFNYKPGTASLAALGAAVAGADYIKVGLYDIQTEAQALELLTKITLAVKDYDPSKKVVASGYSDYKRINSISPLLLPAVAAEAGVDVVMVDTGIKDGKSTFEFMDEQELKEFTDLAHEHGLENAIAGSLKFEDLPVLERIGPDIIGVRGMVCGGDRRTAIRQELVEKLVAECQI.

Residue lysine 27 is the Schiff-base intermediate with substrate of the active site. The active-site Proton acceptor is lysine 85.

This sequence belongs to the MfnB family.

It carries out the reaction 2 D-glyceraldehyde 3-phosphate = 4-(hydroxymethyl)-2-furancarboxaldehyde phosphate + phosphate + 2 H2O. Its pathway is cofactor biosynthesis; methanofuran biosynthesis. In terms of biological role, catalyzes the formation of 4-(hydroxymethyl)-2-furancarboxaldehyde phosphate (4-HFC-P) from two molecules of glyceraldehyde-3-P (GA-3-P). The protein is (5-formylfuran-3-yl)methyl phosphate synthase of Methanosarcina acetivorans (strain ATCC 35395 / DSM 2834 / JCM 12185 / C2A).